Consider the following 215-residue polypeptide: Heart- and neural crest derivatives-expressed protein 1 (215 aa).

Disordered regions lie at residues 53–109 (APDF…RTES) and 166–198 (LKKADGGRESKRKRELQQHEGFPPALGPVEKRI). Residues 65–89 (AAAAATAYGPDARPGQSPGRLEALG) show a composition bias toward low complexity. The span at 92–104 (LGRRKGSGPKKER) shows a compositional bias: basic residues. A bHLH domain is found at 94–146 (RRKGSGPKKERRRTESINSAFAELRECIPNVPADTKLSKIKTLRLATSYIAYL). Position 107 is a phosphothreonine; by PLK4 (Thr107). Ser109 is subject to Phosphoserine; by PLK4.

Efficient DNA binding requires dimerization with another bHLH protein. Forms homodimers and heterodimers with TCF3 gene products E12 and E47, HAND2 and HEY1, HEY2 and HEYL (hairy-related transcription factors). Interacts with MDFIC. Interacts with SOX15; the interaction enhances HAND1-induced differentiation of trophoblast giant cells. In terms of processing, phosphorylation by PLK4 disrupts the interaction with MDFIC and leads to translocation into the nucleoplasm, allowing dimerization and transcription factor activity. As to expression, heart.

It is found in the nucleus. Its subcellular location is the nucleoplasm. The protein resides in the nucleolus. Functionally, transcription factor that plays an essential role in both trophoblast giant cell differentiation and in cardiac morphogenesis. Binds the DNA sequence 5'-NRTCTG-3' (non-canonical E-box). Acts as a transcriptional repressor of SOX15. In the adult, could be required for ongoing expression of cardiac-specific genes. The chain is Heart- and neural crest derivatives-expressed protein 1 (HAND1) from Homo sapiens (Human).